A 214-amino-acid polypeptide reads, in one-letter code: Redox-sensing transcriptional repressor Rex (214 aa).

The segment at residues 17-56 is a DNA-binding region (H-T-H motif); the sequence is LYYRIFKRFYADQVEKASSKQIADAMGIDSATVRRDFSYF. 91–96 contributes to the NAD(+) binding site; it reads GCGNIG.

It belongs to the transcriptional regulatory Rex family. As to quaternary structure, homodimer.

The protein resides in the cytoplasm. In terms of biological role, modulates transcription in response to changes in cellular NADH/NAD(+) redox state. The chain is Redox-sensing transcriptional repressor Rex from Streptococcus equi subsp. zooepidemicus (strain H70).